The following is a 1289-amino-acid chain: DNA-directed RNA polymerase subunit beta (1289 aa).

The protein belongs to the RNA polymerase beta chain family. The RNAP catalytic core consists of 2 alpha, 1 beta, 1 beta' and 1 omega subunit. When a sigma factor is associated with the core the holoenzyme is formed, which can initiate transcription.

It catalyses the reaction RNA(n) + a ribonucleoside 5'-triphosphate = RNA(n+1) + diphosphate. Its function is as follows. DNA-dependent RNA polymerase catalyzes the transcription of DNA into RNA using the four ribonucleoside triphosphates as substrates. The sequence is that of DNA-directed RNA polymerase subunit beta from Methylacidiphilum infernorum (isolate V4) (Methylokorus infernorum (strain V4)).